The following is a 92-amino-acid chain: RNA-binding protein Hfq (92 aa).

In terms of domain architecture, Sm spans 9–68; it reads DPYLNALRRERIPVSIYLVNGIKLQGQIESFDQFVILLKNTVSQMVYKHAISTVVPARSV. The segment covering 69–81 has biased composition (polar residues); it reads SHNNGGTSHTQQA. The interval 69–92 is disordered; the sequence is SHNNGGTSHTQQAPAVEAVADKAE.

It belongs to the Hfq family. In terms of assembly, homohexamer.

Its function is as follows. RNA chaperone that binds small regulatory RNA (sRNAs) and mRNAs to facilitate mRNA translational regulation in response to envelope stress, environmental stress and changes in metabolite concentrations. Also binds with high specificity to tRNAs. This is RNA-binding protein Hfq from Actinobacillus pleuropneumoniae serotype 5b (strain L20).